Here is a 1585-residue protein sequence, read N- to C-terminus: Adhesion G protein-coupled receptor B2 (1585 aa).

The signal sequence occupies residues 1-32 (MENTGWMGKGHRMTPACPLLLSVILSLRLATA). The Extracellular portion of the chain corresponds to 33–936 (FDPAPSACSA…ELAGSPSVPL (904 aa)). Residues Asn106, Asn191, and Asn192 are each glycosylated (N-linked (GlcNAc...) asparagine). Positions 229–238 (AGAGSTTTTS) are enriched in low complexity. Residues 229 to 271 (AGAGSTTTTSPGPPAAHTLSNALVPGGPAPPAEADLHSGSSND) form a disordered region. The O-linked (Xyl...) (chondroitin sulfate) serine glycan is linked to Ser266. TSP type-1 domains follow at residues 309–362 (DPAA…ATCP), 364–417 (HGVW…AACP), 419–472 (EGQW…LECP), and 475–528 (DSKW…KRCP). Intrachain disulfides connect Cys321–Cys355, Cys325–Cys361, Cys336–Cys345, Cys376–Cys411, Cys380–Cys416, Cys391–Cys401, Cys431–Cys466, Cys435–Cys471, Cys446–Cys456, Cys487–Cys522, Cys491–Cys527, Cys502–Cys512, Cys534–Cys569, and Cys557–Cys587. Asn356 carries an N-linked (GlcNAc...) asparagine glycan. N-linked (GlcNAc...) asparagine glycosylation occurs at Asn437. Residues Asn560 and Asn645 are each glycosylated (N-linked (GlcNAc...) asparagine). Positions 757–924 (DRLFLPKEVL…AVLAQPPKDL (168 aa)) constitute a GAIN-B domain. Residues 767-806 (SLSSPGKPATSGAAGSPGRGRGPGTVPPGPGHSHQRLLPA) form a disordered region. Over residues 769 to 780 (SSPGKPATSGAA) the composition is skewed to low complexity. A glycan (N-linked (GlcNAc...) asparagine) is linked at Asn867. Intrachain disulfides connect Cys874/Cys906 and Cys894/Cys908. Residues 874-924 (CASWDYSRADASSGDWDTENCQTLETQAAHTRCQCQHLSTFAVLAQPPKDL) form a GPS region. Residues 937 to 957 (VIGCAVSCMALLTLLAIYAAF) form a helical membrane-spanning segment. Residues 958–965 (WRFIKSER) lie on the Cytoplasmic side of the membrane. The chain crosses the membrane as a helical span at residues 966-986 (SIILLNFCLSILASNILILVG). Residues 987 to 994 (QSRVLSKG) lie on the Extracellular side of the membrane. The chain crosses the membrane as a helical span at residues 995–1015 (VCTMTAAFLHFFFLSSFCWVL). Topologically, residues 1016–1036 (TEAWQSYLAVIGRMRTRLVRK) are cytoplasmic. Residues 1037–1057 (RFLCLGWGLPALVVAVSVGFT) traverse the membrane as a helical segment. Topologically, residues 1058–1078 (RTKGYGTSSYCWLSLEGGLLY) are extracellular. Residues 1079 to 1099 (AFVGPAAVIVLVNMLIGIIVF) form a helical membrane-spanning segment. At 1100 to 1121 (NKLMARDGISDKSKKQRAGSER) the chain is on the cytoplasmic side. Residues 1122–1142 (CPWASLLLPCSACGAVPSPLL) form a helical membrane-spanning segment. Over 1143-1153 (SSASARNAMAS) the chain is Extracellular. Residues 1154 to 1174 (LWSSCVVLPLLALTWMSAVLA) form a helical membrane-spanning segment. Residues 1175–1585 (MTDRRSVLFQ…PPDGDFQTEV (411 aa)) lie on the Cytoplasmic side of the membrane. A Phosphotyrosine modification is found at Tyr1351. 3 disordered regions span residues 1359–1385 (LSLQ…PRRA), 1423–1454 (FQPP…GSTM), and 1498–1585 (YRSQ…QTEV). Residues 1372–1382 (DAPRARPEGTP) are compositionally biased toward basic and acidic residues. A compositionally biased stretch (polar residues) spans 1543–1552 (SWSTFKSMTL). A compositionally biased stretch (acidic residues) spans 1575 to 1585 (EPPDGDFQTEV).

The protein belongs to the G-protein coupled receptor 2 family. Adhesion G-protein coupled receptor (ADGR) subfamily. Heterodimer of 2 chains generated by proteolytic processing; the large extracellular N-terminal fragment and the membrane-bound C-terminal fragment predominantly remain associated and non-covalently linked. Interacts with GABPB2. Interacts (via carboxy-terminus) with TAX1BP3. Interacts with GNAZ. Interacts with SH3GL2. In terms of processing, glycosylated. Post-translationally, autoproteolytically processed at the GPS region of the GAIN-B domain; this cleavage modulates receptor activity. Additionally, furin is involved in the cleavage at another site, in the middle of the extracellular domain, generating a soluble fragment. As to expression, detected in cerebrospinal fluid (at protein level). Strongly expressed in brain. Also detected in heart, thymus, skeletal muscle, and different cell lines.

It localises to the cell membrane. The protein resides in the secreted. Receptor activity is regulated by proteolytic processing. The long N-terminal has a an inhibitory effect on the constitutive signaling activity. Removal of the N-terminal region induces an increase of the receptor activity. In terms of biological role, orphan G-protein coupled receptor involved in cell adhesion and probably in cell-cell interactions. Activates NFAT-signaling pathway, a transcription factor, via the G-protein GNAZ. Involved in angiogenesis inhibition. This Homo sapiens (Human) protein is Adhesion G protein-coupled receptor B2.